Consider the following 657-residue polypeptide: Methionine--tRNA ligase (657 aa).

The short motif at 13 to 23 (YYPSGNLHIGH) is the 'HIGH' region element. Positions 308–312 (KMSKS) match the 'KMSKS' region motif. K311 contacts ATP. Positions 557 to 657 (DFDKVEIKAA…SAIPNGAVIK (101 aa)) constitute a tRNA-binding domain.

This sequence belongs to the class-I aminoacyl-tRNA synthetase family. MetG type 2B subfamily. In terms of assembly, homodimer.

Its subcellular location is the cytoplasm. It carries out the reaction tRNA(Met) + L-methionine + ATP = L-methionyl-tRNA(Met) + AMP + diphosphate. Its function is as follows. Is required not only for elongation of protein synthesis but also for the initiation of all mRNA translation through initiator tRNA(fMet) aminoacylation. This is Methionine--tRNA ligase from Staphylococcus aureus (strain MRSA252).